The primary structure comprises 311 residues: Methionyl-tRNA formyltransferase (311 aa).

A (6S)-5,6,7,8-tetrahydrofolate-binding site is contributed by 112 to 115 (SLLP).

Belongs to the Fmt family.

It catalyses the reaction L-methionyl-tRNA(fMet) + (6R)-10-formyltetrahydrofolate = N-formyl-L-methionyl-tRNA(fMet) + (6S)-5,6,7,8-tetrahydrofolate + H(+). Attaches a formyl group to the free amino group of methionyl-tRNA(fMet). The formyl group appears to play a dual role in the initiator identity of N-formylmethionyl-tRNA by promoting its recognition by IF2 and preventing the misappropriation of this tRNA by the elongation apparatus. This is Methionyl-tRNA formyltransferase from Chelativorans sp. (strain BNC1).